The primary structure comprises 508 residues: Photosystem II CP47 reaction center protein (508 aa).

The next 6 helical transmembrane spans lie at 21–36 (AVHI…WAGS), 101–115 (ILFS…IWHW), 140–156 (GIHL…FGAF), 203–218 (IAAG…FHLS), 237–252 (VLSS…AFVV), and 457–472 (SFAL…HGAR).

Belongs to the PsbB/PsbC family. PsbB subfamily. As to quaternary structure, PSII is composed of 1 copy each of membrane proteins PsbA, PsbB, PsbC, PsbD, PsbE, PsbF, PsbH, PsbI, PsbJ, PsbK, PsbL, PsbM, PsbT, PsbX, PsbY, PsbZ, Psb30/Ycf12, at least 3 peripheral proteins of the oxygen-evolving complex and a large number of cofactors. It forms dimeric complexes. It depends on Binds multiple chlorophylls. PSII binds additional chlorophylls, carotenoids and specific lipids. as a cofactor.

It localises to the plastid. Its subcellular location is the chloroplast thylakoid membrane. One of the components of the core complex of photosystem II (PSII). It binds chlorophyll and helps catalyze the primary light-induced photochemical processes of PSII. PSII is a light-driven water:plastoquinone oxidoreductase, using light energy to abstract electrons from H(2)O, generating O(2) and a proton gradient subsequently used for ATP formation. The sequence is that of Photosystem II CP47 reaction center protein from Oenothera argillicola (Appalachian evening primrose).